Here is a 196-residue protein sequence, read N- to C-terminus: Large ribosomal subunit protein eL15 (196 aa).

The segment at 159 to 196 (RAYRGRTSAGQRGRGQQKRGKGTEHTRPSIRANDKRGK) is disordered. The segment covering 179-196 (KGTEHTRPSIRANDKRGK) has biased composition (basic and acidic residues).

It belongs to the eukaryotic ribosomal protein eL15 family.

This chain is Large ribosomal subunit protein eL15, found in Natronomonas pharaonis (strain ATCC 35678 / DSM 2160 / CIP 103997 / JCM 8858 / NBRC 14720 / NCIMB 2260 / Gabara) (Halobacterium pharaonis).